The primary structure comprises 617 residues: Transmembrane protein 232 (617 aa).

The chain crosses the membrane as a helical span at residues 129 to 149 (LVKIGYLIFLRLFVFFLHGHL). Residues 567–604 (LKQIEAVCEAQNRKDEEEKEKIRFQEIMKQRERKLNKQ) adopt a coiled-coil conformation. Residues 598 to 617 (ERKLNKQTKPYEITPSEKKE) are disordered.

Its subcellular location is the membrane. Its function is as follows. Plays a critical role for male fertility and sperm motility by regulating sperm cytoplasm removal and maintaining axoneme integrity. In Rattus norvegicus (Rat), this protein is Transmembrane protein 232 (Tmem232).